Here is a 358-residue protein sequence, read N- to C-terminus: 4-hydroxy-3-methylbut-2-en-1-yl diphosphate synthase (flavodoxin) (358 aa).

Positions 264, 267, 299, and 306 each coordinate [4Fe-4S] cluster.

It belongs to the IspG family. It depends on [4Fe-4S] cluster as a cofactor.

It carries out the reaction (2E)-4-hydroxy-3-methylbut-2-enyl diphosphate + oxidized [flavodoxin] + H2O + 2 H(+) = 2-C-methyl-D-erythritol 2,4-cyclic diphosphate + reduced [flavodoxin]. It participates in isoprenoid biosynthesis; isopentenyl diphosphate biosynthesis via DXP pathway; isopentenyl diphosphate from 1-deoxy-D-xylulose 5-phosphate: step 5/6. In terms of biological role, converts 2C-methyl-D-erythritol 2,4-cyclodiphosphate (ME-2,4cPP) into 1-hydroxy-2-methyl-2-(E)-butenyl 4-diphosphate. The protein is 4-hydroxy-3-methylbut-2-en-1-yl diphosphate synthase (flavodoxin) of Helicobacter acinonychis (strain Sheeba).